The primary structure comprises 446 residues: Tubulin alpha-1B chain (446 aa).

Position 11 (Gln11) interacts with GTP. Positions 34–55 (GRLMDDSPSKHDSGSTFFSETG) are disordered. The span at 35 to 46 (RLMDDSPSKHDS) shows a compositional bias: basic and acidic residues. Positions 69, 138, 142, 143, 177, 204, and 226 each coordinate GTP. Glu69 contacts Mg(2+). Glu252 is a catalytic residue.

This sequence belongs to the tubulin family. In terms of assembly, dimer of alpha and beta chains. A typical microtubule is a hollow water-filled tube with an outer diameter of 25 nm and an inner diameter of 15 nM. Alpha-beta heterodimers associate head-to-tail to form protofilaments running lengthwise along the microtubule wall with the beta-tubulin subunit facing the microtubule plus end conferring a structural polarity. Microtubules usually have 13 protofilaments but different protofilament numbers can be found in some organisms and specialized cells. It depends on Mg(2+) as a cofactor.

The protein resides in the cytoplasm. It localises to the cytoskeleton. It catalyses the reaction GTP + H2O = GDP + phosphate + H(+). Tubulin is the major constituent of microtubules, a cylinder consisting of laterally associated linear protofilaments composed of alpha- and beta-tubulin heterodimers. Microtubules grow by the addition of GTP-tubulin dimers to the microtubule end, where a stabilizing cap forms. Below the cap, tubulin dimers are in GDP-bound state, owing to GTPase activity of alpha-tubulin. This is Tubulin alpha-1B chain (TUB-1B) from Schizophyllum commune (Split gill fungus).